The sequence spans 146 residues: Cystatin-C (146 aa).

The first 26 residues, 1–26, serve as a signal peptide directing secretion; that stretch reads MAGPLRAPLLLLAILAVALAVSPAAG. Ser43 is modified (phosphoserine). The Secondary area of contact signature appears at 81-85; the sequence is QIVAG. 2 disulfide bridges follow: Cys99/Cys109 and Cys123/Cys143.

This sequence belongs to the cystatin family.

The protein localises to the secreted. Its function is as follows. As an inhibitor of cysteine proteinases, this protein is thought to serve an important physiological role as a local regulator of this enzyme activity. The polypeptide is Cystatin-C (CST3) (Macaca mulatta (Rhesus macaque)).